Here is a 759-residue protein sequence, read N- to C-terminus: Glucosylceramidase (759 aa).

Residue E247 is the Proton donor of the active site. The active-site Nucleophile is E497. The disordered stretch occupies residues 576-600; sequence AFENESQRDPQSPAYSESQRNTESY. Residues 584–599 show a composition bias toward polar residues; it reads DPQSPAYSESQRNTES.

This sequence belongs to the glycosyl hydrolase 5 (cellulase A) family.

The protein resides in the membrane. It catalyses the reaction a beta-D-glucosyl-(1&lt;-&gt;1')-N-acylsphing-4-enine + H2O = an N-acylsphing-4-enine + D-glucose. In terms of biological role, specifically hydrolyzes the glucosidic linkage in glucosylceramide. May prevent accumulation of aberrent glucosylceramide containing immature ceramide. The polypeptide is Glucosylceramidase (Aspergillus fumigatus (Neosartorya fumigata)).